A 108-amino-acid polypeptide reads, in one-letter code: uncharacterized protein (108 aa).

A signal peptide spans 1–22 (MMIKQCVICLSLLVFGTTAAHA).

This is an uncharacterized protein from Bacillus subtilis (strain 168).